The primary structure comprises 186 residues: MKLFVGLGNPGKEYEQTRHNIGFFVIDELAKRWNVSLKTAKFRGLFGTASVFGEKVALCKPLTYMNLSGECVCPLIDFYDIAVDDVIIIYDDLDLPPGKIRLRLKGGSGGHNGVKSIIHHLGTEQFKRIRIGIGRPTNGQPVADYVLSRFTEEEKPAVMEAVLRAADACEQAVTTPFIQVMNDFNE.

Tyrosine 14 contributes to the tRNA binding site. The Proton acceptor role is filled by histidine 19. The tRNA site is built by tyrosine 64, asparagine 66, and asparagine 112.

The protein belongs to the PTH family. In terms of assembly, monomer.

It localises to the cytoplasm. The enzyme catalyses an N-acyl-L-alpha-aminoacyl-tRNA + H2O = an N-acyl-L-amino acid + a tRNA + H(+). Functionally, hydrolyzes ribosome-free peptidyl-tRNAs (with 1 or more amino acids incorporated), which drop off the ribosome during protein synthesis, or as a result of ribosome stalling. Its function is as follows. Catalyzes the release of premature peptidyl moieties from peptidyl-tRNA molecules trapped in stalled 50S ribosomal subunits, and thus maintains levels of free tRNAs and 50S ribosomes. This chain is Peptidyl-tRNA hydrolase, found in Geobacillus thermodenitrificans (strain NG80-2).